The chain runs to 440 residues: Tubulin beta-3 chain (440 aa).

8 residues coordinate GTP: Gln-2, Glu-60, Ser-129, Gly-133, Thr-134, Gly-135, Asn-195, and Asn-217. Glu-60 is a Mg(2+) binding site. The tract at residues 411–440 is disordered; the sequence is SEYQQYQDATADEEGEYEDEEEEEPEHGYE. Residues 420 to 440 show a composition bias toward acidic residues; the sequence is TADEEGEYEDEEEEEPEHGYE.

It belongs to the tubulin family. Dimer of alpha and beta chains. A typical microtubule is a hollow water-filled tube with an outer diameter of 25 nm and an inner diameter of 15 nM. Alpha-beta heterodimers associate head-to-tail to form protofilaments running lengthwise along the microtubule wall with the beta-tubulin subunit facing the microtubule plus end conferring a structural polarity. Microtubules usually have 13 protofilaments but different protofilament numbers can be found in some organisms and specialized cells. It depends on Mg(2+) as a cofactor.

It localises to the cytoplasm. Its subcellular location is the cytoskeleton. Its function is as follows. Tubulin is the major constituent of microtubules, a cylinder consisting of laterally associated linear protofilaments composed of alpha- and beta-tubulin heterodimers. Microtubules grow by the addition of GTP-tubulin dimers to the microtubule end, where a stabilizing cap forms. Below the cap, tubulin dimers are in GDP-bound state, owing to GTPase activity of alpha-tubulin. This is Tubulin beta-3 chain (TUBB3) from Pisum sativum (Garden pea).